Consider the following 423-residue polypeptide: 5-hydroxytryptamine receptor 1A (423 aa).

At 1–38 (MEGLSPRQGNNTTSSEGPFGTLGNATGISDVTFSYQVI) the chain is on the extracellular side. Asn-10, Asn-11, and Asn-24 each carry an N-linked (GlcNAc...) asparagine glycan. Residues 39–59 (TSLLLGTLIFCAVLGNACVVA) form a helical membrane-spanning segment. The Cytoplasmic portion of the chain corresponds to 60-73 (AIALERSLQNVANY). Residues 74 to 98 (LIGSLAVTDLMVSVLVLPMAALYQV) traverse the membrane as a helical segment. Residues 99-107 (LNKWTLGQV) are Extracellular-facing. The helical transmembrane segment at 108 to 132 (TCDLFIALDVLCCTSSILHLCAIAL) threads the bilayer. Cys-109 and Cys-187 are oxidised to a cystine. Serotonin contacts are provided by Asp-116 and Cys-120. A DRY motif; important for ligand-induced conformation changes motif is present at residues 133 to 135 (DRY). Residues 133-152 (DRYWAITDPIDYVNKRTPRR) are Cytoplasmic-facing. Residues 153–174 (AAALISLTWLIGFLISIPPMLG) traverse the membrane as a helical segment. Residues 175-193 (WRTPEDRSDPDACTISKDH) are Extracellular-facing. The helical transmembrane segment at 194 to 216 (GYTIYSTFGAFYIPLLLMLVLYG) threads the bilayer. Residues 217-346 (RIFRAARFRI…LARERKTVKT (130 aa)) lie on the Cytoplasmic side of the membrane. Positions 235–277 (RKGADARSGVSPAPQPRKSVNGEPGGREWRQGPGSQAGGPLCT) are disordered. Positions 345, 346, and 352 each coordinate 1D-myo-inositol 4-phosphate. Residues 347-370 (LGIIMGTFILCWLPFFIVALVLPF) traverse the membrane as a helical segment. At 371 to 378 (CESSCHMP) the chain is on the extracellular side. A helical membrane pass occupies residues 379–403 (TLLGAIINWLGYSNSLLNPVIYAYF). The NPxxY motif; important for ligand-induced conformation changes and signaling motif lies at 396–400 (NPVIY). Phe-403, Asn-404, and Lys-405 together coordinate 1D-myo-inositol 4-phosphate. Residues 404–423 (NKDFQNAFKKIVRCKFCRRR) are Cytoplasmic-facing.

It belongs to the G-protein coupled receptor 1 family. 5-hydroxytryptamine receptor subfamily. HTR1A sub-subfamily. As to quaternary structure, heterodimer; heterodimerizes with GPER1. Interacts with YIF1B. Interacts with GPR39 and GALR1.

It localises to the cell membrane. The protein resides in the cell projection. It is found in the dendrite. Its activity is regulated as follows. G-protein coupled receptor activity is regulated by lipids: phosphatidylinositol 4-phosphate increases HTR1A-mediated activity. In terms of biological role, G-protein coupled receptor for 5-hydroxytryptamine (serotonin). Also functions as a receptor for various drugs and psychoactive substances. Ligand binding causes a conformation change that triggers signaling via guanine nucleotide-binding proteins (G proteins) and modulates the activity of downstream effectors, such as adenylate cyclase. HTR1A is coupled to G(i)/G(o) G alpha proteins and mediates inhibitory neurotransmission: signaling inhibits adenylate cyclase activity and activates a phosphatidylinositol-calcium second messenger system that regulates the release of Ca(2+) ions from intracellular stores. Beta-arrestin family members regulate signaling by mediating both receptor desensitization and resensitization processes. This chain is 5-hydroxytryptamine receptor 1A (HTR1A), found in Canis lupus familiaris (Dog).